We begin with the raw amino-acid sequence, 465 residues long: Hexokinase type 1 (465 aa).

The Hexokinase domain occupies 8-447 (EEDFPEVYKV…CGVGAAIMAG (440 aa)). The segment at 65–197 (TGRERGQFLA…EISVDVMGII (133 aa)) is hexokinase small subdomain. ATP is bound at residue Lys-88. A glucose-binding region spans residues 139 to 165 (PLGIAFAFTLKKLALDVGILVSWTKEF). A hexokinase large subdomain region spans residues 198–436 (NVGAGSLLAL…YNFEFVITQD (239 aa)).

Belongs to the hexokinase family.

It carries out the reaction a D-hexose + ATP = a D-hexose 6-phosphate + ADP + H(+). The enzyme catalyses D-mannose + ATP = D-mannose 6-phosphate + ADP + H(+). It catalyses the reaction D-fructose + ATP = D-fructose 6-phosphate + ADP + H(+). The catalysed reaction is D-glucose + ATP = D-glucose 6-phosphate + ADP + H(+). It functions in the pathway carbohydrate metabolism; hexose metabolism. Its pathway is carbohydrate degradation; glycolysis; D-glyceraldehyde 3-phosphate and glycerone phosphate from D-glucose: step 1/4. Functionally, catalyzes the phosphorylation of various hexoses to hexose 6-phosphate. The sequence is that of Hexokinase type 1 (Hex-t1) from Drosophila melanogaster (Fruit fly).